The following is a 154-amino-acid chain: MGNCLKSPTSDDISLLHESQSDRASFGEGTEPDQEPPPPYQEQVPVPVYHPTPSQTRLATQLTEEEQIRIAQRIGLIQHLPKGVYDPGRDGSEKKIRECVICMMDFVYGDPIRFLPCMHIYHLDCIDDWLMRSFTCPSCMEPVDAALLSSYETN.

Residues 1-12 (MGNCLKSPTSDD) show a composition bias toward polar residues. A disordered region spans residues 1-53 (MGNCLKSPTSDDISLLHESQSDRASFGEGTEPDQEPPPPYQEQVPVPVYHPTP). The N-myristoyl glycine moiety is linked to residue G2. A lipid anchor (S-palmitoyl cysteine) is attached at C4. A phosphoserine mark is found at S14 and S25. Residues 37 to 40 (PPPY) carry the PPxY motif motif. Low complexity predominate over residues 41–51 (QEQVPVPVYHP). An RING-type zinc finger spans residues 99–140 (CVICMMDFVYGDPIRFLPCMHIYHLDCIDDWLMRSFTCPSCM). T135 bears the Phosphothreonine; by PKB/AKT1 mark.

In terms of assembly, interacts (when phosphorylated) with 14-3-3. Interacts with the E3 ubiquitin-ligases NEDD4, ITCH, SMURF2 and WWP1. Also interacts with the E2 ubiquitin-conjugating enzymes UBE2D1 and UBE2N, but neither with CDC34, nor with UBE2L3. Interacts with ZNF350, EPS15 and STAMBP. After TNF stimulation, interacts with TAX1BP1, TNFAIP3 and RIPK1; these interactions are transient and they are lost after 1 hour of stimulation with TNF. Interacts with GGA1. In terms of processing, ubiquitinated in the presence of ITCH, SMURF2 and UBE2D1, as well as WWP1. Post-translationally, phosphorylation by PKB/AKT1 may accelerate degradation by the proteasome. Acylation at both Gly-2 and Cys-4 is required for proper localization to the endosomes.

It is found in the early endosome. The protein resides in the recycling endosome. It localises to the cytoplasm. The protein localises to the nucleus. Essential component of a ubiquitin-editing protein complex, comprising also TNFAIP3, ITCH and TAX1BP1, that ensures the transient nature of inflammatory signaling pathways. Promotes the association of TNFAIP3 to RIPK1 after TNF stimulation. TNFAIP3 deubiquitinates 'Lys-63' polyubiquitin chains on RIPK1 and catalyzes the formation of 'Lys-48'-polyubiquitin chains. This leads to RIPK1 proteasomal degradation and consequently termination of the TNF- or LPS-mediated activation of NF-kappa-B. Recruits STAMBP to the E3 ubiquitin-ligase SMURF2 for ubiquitination, leading to its degradation by the 26S proteasome. In Bos taurus (Bovine), this protein is RING finger protein 11 (RNF11).